The chain runs to 439 residues: Elongation factor Tu, mitochondrial (439 aa).

A tr-type G domain is found at 51–246 (KPHVNIGTIG…AVDSYITLPE (196 aa)). The G1 stretch occupies residues 60–67 (GHVDHGKT). 60-67 (GHVDHGKT) provides a ligand contact to GTP. A G2 region spans residues 101-105 (GITIS). The interval 122–125 (DCPG) is G3. GTP contacts are provided by residues 122 to 126 (DCPGH) and 177 to 180 (NKVD). The interval 177–180 (NKVD) is G4. The segment at 214–216 (SAL) is G5.

This sequence belongs to the TRAFAC class translation factor GTPase superfamily. Classic translation factor GTPase family. EF-Tu/EF-1A subfamily.

It is found in the mitochondrion. Functionally, this protein promotes the GTP-dependent binding of aminoacyl-tRNA to the A-site of ribosomes during protein biosynthesis. This is Elongation factor Tu, mitochondrial (tuf1) from Schizosaccharomyces pombe (strain 972 / ATCC 24843) (Fission yeast).